We begin with the raw amino-acid sequence, 874 residues long: Alanine--tRNA ligase (874 aa).

Zn(2+) contacts are provided by histidine 564, histidine 568, cysteine 665, and histidine 669.

The protein belongs to the class-II aminoacyl-tRNA synthetase family. The cofactor is Zn(2+).

It is found in the cytoplasm. It catalyses the reaction tRNA(Ala) + L-alanine + ATP = L-alanyl-tRNA(Ala) + AMP + diphosphate. Catalyzes the attachment of alanine to tRNA(Ala) in a two-step reaction: alanine is first activated by ATP to form Ala-AMP and then transferred to the acceptor end of tRNA(Ala). Also edits incorrectly charged Ser-tRNA(Ala) and Gly-tRNA(Ala) via its editing domain. The protein is Alanine--tRNA ligase of Acidovorax sp. (strain JS42).